Here is a 2385-residue protein sequence, read N- to C-terminus: Neuron navigator 3 (2385 aa).

A disordered region spans residues 17–38; the sequence is SKPVHTALPIPNLGTTGSQHCS. Residues 29–38 show a composition bias toward polar residues; it reads LGTTGSQHCS. Positions 77 to 184 constitute a Calponin-homology (CH) domain; sequence KEDSKIYTDW…LFFSLSRYKQ (108 aa). The segment at 203–625 is disordered; it reads VTHASPPSEA…LPQQQQHSHP (423 aa). 3 stretches are compositionally biased toward polar residues: residues 210-243, 258-279, and 297-316; these read SEAS…TSQK, GSSS…FNSI, and KGPQ…STAG. The segment covering 318-329 has biased composition (low complexity); it reads PPASAIPSPSAS. Residues 335-352 show a composition bias toward polar residues; that stretch reads KSMNVKHSATSTMLTVKQ. Composition is skewed to low complexity over residues 353–363 and 427–439; these read SSTATSPTPSS and NSGL…TNSS. Basic and acidic residues predominate over residues 465-491; that stretch reads PKEKEEKNRDKNKVCTEKPVKEEKDQV. The span at 521–535 shows a compositional bias: low complexity; sequence IPSSSGIPKPGSKVP. 3 stretches are compositionally biased toward polar residues: residues 537–548, 557–567, and 591–625; these read VKQTISPGSTAS, TKGSPSQSLSK, and ASPS…HSHP. Positions 679–707 form a coiled coil; that stretch reads ETRRMRTVKNIADLRQNLEETMSSLRGTQ. 6 disordered regions span residues 877–1312, 1351–1370, 1410–1468, 1650–1778, 1850–1881, and 2360–2385; these read ADSW…SPLF, SSSS…TSLH, LSES…SAMS, GALN…KRQN, DRLK…SRQS, and SSTQ…ESTL. Low complexity predominate over residues 882-895; the sequence is DSSSVSSGLSDTLD. Positions 896–925 are enriched in polar residues; the sequence is NISTDDLNTTSSVSSYSNITVPSRKNTQLR. The segment covering 942 to 959 has biased composition (basic and acidic residues); that stretch reads EELKKPEEDFDSHGDAGG. Residues 979-988 are compositionally biased toward polar residues; that stretch reads ASLSVSQTGS. A compositionally biased stretch (basic and acidic residues) spans 1014–1026; it reads GKTDDAKASEKGK. Composition is skewed to low complexity over residues 1074-1092 and 1157-1170; these read GSSA…GSAT and SSTS…SSKS. Residues 1187–1196 show a composition bias toward polar residues; it reads GRSSPVTVNQ. Composition is skewed to low complexity over residues 1206 to 1226 and 1253 to 1263; these read VSDS…TSAS and GAKAGGKSASA. Positions 1264–1289 are enriched in polar residues; it reads PNTEGVKSSSVMPSPSTTLARQGSLE. Residues 1296–1305 are compositionally biased toward gly residues; the sequence is GSMGSAGGLS. Residues 1436 to 1445 show a composition bias toward basic and acidic residues; the sequence is NQEEGKEWLR. A compositionally biased stretch (polar residues) spans 1446 to 1462; that stretch reads SHSTGGLQDTGNQSPLV. A phosphoserine mark is found at S1459 and S1463. Residues 1562 to 1653 adopt a coiled-coil conformation; that stretch reads AEEKAHSEQI…AQAAIQGALN (92 aa). The span at 1672–1689 shows a compositional bias: low complexity; the sequence is SVSSINSATSHSSIGSGN. Over residues 1701–1714 the composition is skewed to polar residues; that stretch reads WVNSRGSELRSSFK. Residues 1794 to 1861 are a coiled coil; the sequence is EAEAEIILQL…LKAETGNTAK (68 aa). The span at 1867–1881 shows a compositional bias: low complexity; it reads SESSSSTSSSSSRQS.

It belongs to the Nav/unc-53 family. As to expression, highly expressed in brain. Expressed at low levels in heart and placenta. Present in activated T-cells but not in resting T-cells (at protein level). Down-regulated in primary neuroblastoma.

It localises to the nucleus outer membrane. In terms of biological role, plays a role in cell migration. May be involved in neuron regeneration. May regulate IL2 production by T-cells. The sequence is that of Neuron navigator 3 (NAV3) from Homo sapiens (Human).